Reading from the N-terminus, the 306-residue chain is Solute carrier family 25 member 48 (306 aa).

3 Solcar repeats span residues 3 to 86, 101 to 200, and 209 to 296; these read SFQL…TQRF, RSLS…LSEW, and PSPY…SLKA. 6 helical membrane-spanning segments follow: residues 9-29, 61-81, 107-127, 184-204, 212-232, and 272-290; these read FVAG…LDTV, GMSF…GVFS, LLAS…VELI, IPGY…ITPE, YAAW…ATPM, and ITVN…FLGY.

This sequence belongs to the mitochondrial carrier (TC 2.A.29) family.

The protein localises to the mitochondrion inner membrane. In Mus musculus (Mouse), this protein is Solute carrier family 25 member 48 (Slc25a48).